We begin with the raw amino-acid sequence, 123 residues long: UPF0382 membrane protein YwdK (123 aa).

4 helical membrane passes run 3 to 23 (VFII…AFGA), 49 to 69 (ALGL…GSVT), 71 to 91 (AGWL…ILSV), and 96 to 116 (ILGA…IMIV).

The protein belongs to the UPF0382 family.

The protein resides in the cell membrane. The polypeptide is UPF0382 membrane protein YwdK (ywdK) (Bacillus subtilis (strain 168)).